The chain runs to 56 residues: Ovomucoid (56 aa).

Positions 6-56 constitute a Kazal-like domain; the sequence is VDCSDHPKPACLQEQKPLCGSDNKTYDNKCSFCNAVVDSNGTLTLSHFGKC. 3 disulfide bridges follow: Cys-8–Cys-38, Cys-16–Cys-35, and Cys-24–Cys-56. Asn-45 is a glycosylation site (N-linked (GlcNAc...) asparagine).

Its subcellular location is the secreted. The protein is Ovomucoid of Penelope jacquacu (Spix's guan).